Reading from the N-terminus, the 235-residue chain is uncharacterized protein (235 aa).

This is an uncharacterized protein from Salmonella typhimurium (strain LT2 / SGSC1412 / ATCC 700720).